The primary structure comprises 147 residues: Large ribosomal subunit protein uL16 (147 aa).

It belongs to the universal ribosomal protein uL16 family. Part of the 50S ribosomal subunit.

Functionally, binds 23S rRNA and is also seen to make contacts with the A and possibly P site tRNAs. The chain is Large ribosomal subunit protein uL16 from Clostridium acetobutylicum (strain ATCC 824 / DSM 792 / JCM 1419 / IAM 19013 / LMG 5710 / NBRC 13948 / NRRL B-527 / VKM B-1787 / 2291 / W).